The primary structure comprises 160 residues: Competence protein ComGD (160 aa).

Residues 30-50 (AFTMLESLLVLGLVSILALGL) traverse the membrane as a helical segment.

The transformation pili are flexible filaments, consisting mainly of the major pilin ComGC and smaller amounts of the minor pilins, including at least ComGD, ComGF and ComGG, and perhaps ComGE. Interacts with ComGE. Interacts with ComGF. Interacts with ComGG.

Its subcellular location is the cell membrane. The protein localises to the cell surface. It localises to the fimbrium. Its function is as follows. Required for formation of the type IV-like pilus (T4P) that plays a role in transformation. Transformation pili are dynamically extended and retracted, perhaps thereby promoting DNA uptake and transformation. Involved in transformation. Required for DNA binding. The sequence is that of Competence protein ComGD from Streptococcus pneumoniae (strain ATCC BAA-255 / R6).